The sequence spans 326 residues: Vacuolar protein sorting-associated protein 26A (326 aa).

Belongs to the VPS26 family. As to quaternary structure, component of the heterotrimeric retromer cargo-selective complex (CSC) which is believed to associate with variable sorting nexins to form functionally distinct retromer complex variants.

It localises to the cytoplasm. The protein resides in the endosome membrane. It is found in the early endosome. Its function is as follows. Acts as a component of the retromer cargo-selective complex (CSC). The CSC is believed to be the core functional component of retromer or respective retromer complex variants acting to prevent missorting of selected transmembrane cargo proteins into the lysosomal degradation pathway. Retromer mediates retrograde transport of cargo proteins from endosomes to the trans-Golgi network (TGN). In Xenopus tropicalis (Western clawed frog), this protein is Vacuolar protein sorting-associated protein 26A (vps26a).